Consider the following 393-residue polypeptide: Cysteine protease ATG4B (393 aa).

Methionine 1 carries the N-acetylmethionine modification. Serine 34 carries the phosphoserine modification. Cysteine 74 acts as the Nucleophile in catalysis. S-nitrosocysteine is present on cysteine 189. Residues aspartate 278 and histidine 280 contribute to the active site. S-nitrosocysteine is present on residues cysteine 292 and cysteine 301. A disulfide bond links cysteine 292 and cysteine 361. Residues serine 316 and serine 383 each carry the phosphoserine modification. Positions 388 to 391 match the LIR motif; sequence FEIL. Phosphoserine is present on serine 392.

The protein belongs to the peptidase C54 family. As to quaternary structure, interacts with PFKP; promoting phosphorylation of ATG4B at Ser-34. Interacts with GBP7. Phosphorylation at Ser-383 and Ser-392 promotes autophagy by increasing protein delipidation activity without affecting proteolytic activation of ATG8 proteins. Phosphorylation at Ser-316 by ULK1 inhibits autophagy by decreasing both proteolytic activation and delipidation activities. Phosphorylation at Ser-316 is dephosphorylated by protein phosphatase 2A (PP2A). Phosphorylation at Ser-34 by AKT2 promotes its hydrolase activity, leading to increased proteolytic activation and delipidation of ATG8 family proteins. Phosphorylation at Ser-34 by AKT1 promotes mitochondrial localization and inhibition of the F1F0-ATP synthase activity, leading to elevation of mitochondrial reactive oxygen species (ROS). In terms of processing, ubiquitinated by RNF5, leading to its degradation by the proteasome. Post-translationally, S-nitrosylation in response to high glucose decreases both proteolytic activation and delipidation activities. O-glycosylated by OGT, leading to increase protease activity, thereby promoting the proteolytic activation of ATG8 family proteins. In terms of processing, forms reversible intrachain disulfide bonds in response to oxidative stress. Forms interchain disulfide bonds, leading to formation of homooligomers in response to oxidation.

It is found in the cytoplasm. Its subcellular location is the cytosol. The protein resides in the cytoplasmic vesicle. It localises to the autophagosome. The protein localises to the endoplasmic reticulum. It is found in the mitochondrion. It catalyses the reaction [protein]-C-terminal L-amino acid-glycyl-phosphatidylethanolamide + H2O = [protein]-C-terminal L-amino acid-glycine + a 1,2-diacyl-sn-glycero-3-phosphoethanolamine. The catalysed reaction is [protein]-C-terminal L-amino acid-glycyl-phosphatidylserine + H2O = [protein]-C-terminal L-amino acid-glycine + a 1,2-diacyl-sn-glycero-3-phospho-L-serine. Its activity is regulated as follows. Inhibited by N-ethylmaleimide. Redox-regulated during autophagy since reducing conditions activate ATG4A whereas an oxidizing environment such as the presence of H(2)O(2) inhibits its activity. The cysteine protease activity compounds is inhibited by styrylquinoline compounds 4-28 and LV-320. Cysteine protease that plays a key role in autophagy by mediating both proteolytic activation and delipidation of ATG8 family proteins. Required for canonical autophagy (macroautophagy), non-canonical autophagy as well as for mitophagy. The protease activity is required for proteolytic activation of ATG8 family proteins: cleaves the C-terminal amino acid of ATG8 proteins MAP1LC3A, MAP1LC3B, MAP1LC3C, GABARAPL1, GABARAPL2 and GABARAP, to reveal a C-terminal glycine. Exposure of the glycine at the C-terminus is essential for ATG8 proteins conjugation to phosphatidylethanolamine (PE) and insertion to membranes, which is necessary for autophagy. Protease activity is also required to counteract formation of high-molecular weight conjugates of ATG8 proteins (ATG8ylation): acts as a deubiquitinating-like enzyme that removes ATG8 conjugated to other proteins, such as ATG3. In addition to the protease activity, also mediates delipidation of ATG8 family proteins. Catalyzes delipidation of PE-conjugated forms of ATG8 proteins during macroautophagy. Also involved in non-canonical autophagy, a parallel pathway involving conjugation of ATG8 proteins to single membranes at endolysosomal compartments, by catalyzing delipidation of ATG8 proteins conjugated to phosphatidylserine (PS). Compared to other members of the family (ATG4A, ATG4C or ATG4C), constitutes the major protein for proteolytic activation of ATG8 proteins, while it displays weaker delipidation activity than other ATG4 paralogs. Involved in phagophore growth during mitophagy independently of its protease activity and of ATG8 proteins: acts by regulating ATG9A trafficking to mitochondria and promoting phagophore-endoplasmic reticulum contacts during the lipid transfer phase of mitophagy. The sequence is that of Cysteine protease ATG4B from Rattus norvegicus (Rat).